Reading from the N-terminus, the 530-residue chain is Cytochrome P450 monooxygenase apf7 (530 aa).

The helical transmembrane segment at 6–26 threads the bilayer; the sequence is VSPVSIWVFVIYAVTIIIAIY. N-linked (GlcNAc...) asparagine glycosylation is present at Asn-85. Cys-464 serves as a coordination point for heme.

It belongs to the cytochrome P450 family. Heme is required as a cofactor.

The protein resides in the membrane. It participates in secondary metabolite biosynthesis. In terms of biological role, cytochrome P450 monooxygenase; part of the gene cluster that mediates the biosynthesis of the cyclic tetrapeptide apicidin F (APF). The non-ribosomal peptide synthetase apf1 incorporates four different amino acids to produce apicidin F: L-phenylalanine, D-pipecolic acid (D-pip), N-methoxy-L-tryptophan and L-2-aminooctanedioic acid. L-Phenylalanine is the only proteinogenic amino acid directly used by apf1. The 3 other apf1 substrates are non-proteinogenic and have to be modified by other enzymes of the cluster. Lysine is converted to delta-1-pyrroline-5-carboxylate (P5C) which is reduced to L-pipecolic acid (L-pip) by apf3. L-pip is epimerized to D-pip, probably by apf1 activity, prior to incorporation. L-Tryptophan is N-oxidyzed by one of the cytochrome P450 monooxygenases (apf7 or apf8), and further methylated at the hydroxy group by the O-methyltransferase apf6 to yield N-methoxy-L-tryptophan. The synthesis of the fourth apf1 substrate is more complex. The fatty acid synthase apf5 is involved in the synthesis of the octanoic acid backbone of L-2-aminooctanedioic acid by fixing one acetyl-CoA unit and three malonyl-CoA units. Then one of the cytochrome P450 monooxygenases (apf7 or apf8) may oxidize this backbone to 2-oxooctanoic acid. The aminotransferase apf4 is predicted to catalyze the exchange of the keto group with an amino group. The next step would be the oxidation of 2-aminooctanoic acid by one of the cytochrome P450 monooxygenases (apf7 or apf8). The last step is the oxidation of 2-amino-8-hydroxyoctanoic acid to 2-aminooctanedioic acid is catalyzed by the FAD-dependent monooxygenase apf9. The protein is Cytochrome P450 monooxygenase apf7 of Gibberella fujikuroi (strain CBS 195.34 / IMI 58289 / NRRL A-6831) (Bakanae and foot rot disease fungus).